A 474-amino-acid chain; its full sequence is Probable dipeptidase B (474 aa).

C11 is a catalytic residue.

The protein belongs to the peptidase C69 family.

The enzyme catalyses an L-aminoacyl-L-amino acid + H2O = 2 an L-alpha-amino acid. This is Probable dipeptidase B (pepDB) from Lactococcus lactis subsp. lactis (strain IL1403) (Streptococcus lactis).